The sequence spans 108 residues: MEETFTEITPQQAWEMMQNEDAVLVDIRDMVRFSHSRPQGAFHLTNHSYGKFLDEYDYDEPVIVSCYHGVSSRNTAQYLVEQGFERVYSVKGGFEGWVRSELPIELGY.

The region spanning 18–106 (QNEDAVLVDI…WVRSELPIEL (89 aa)) is the Rhodanese domain. The active-site Cysteine persulfide intermediate is Cys-66.

The protein belongs to the GlpE family.

The protein localises to the cytoplasm. It catalyses the reaction thiosulfate + hydrogen cyanide = thiocyanate + sulfite + 2 H(+). The catalysed reaction is thiosulfate + [thioredoxin]-dithiol = [thioredoxin]-disulfide + hydrogen sulfide + sulfite + 2 H(+). Transferase that catalyzes the transfer of sulfur from thiosulfate to thiophilic acceptors such as cyanide or dithiols. May function in a CysM-independent thiosulfate assimilation pathway by catalyzing the conversion of thiosulfate to sulfite, which can then be used for L-cysteine biosynthesis. The protein is Thiosulfate sulfurtransferase GlpE of Glaesserella parasuis serovar 5 (strain SH0165) (Haemophilus parasuis).